The primary structure comprises 1392 residues: DNA-directed RNA polymerase subunit beta (1392 aa).

Belongs to the RNA polymerase beta chain family. As to quaternary structure, the RNAP catalytic core consists of 2 alpha, 1 beta, 1 beta' and 1 omega subunit. When a sigma factor is associated with the core the holoenzyme is formed, which can initiate transcription.

It carries out the reaction RNA(n) + a ribonucleoside 5'-triphosphate = RNA(n+1) + diphosphate. In terms of biological role, DNA-dependent RNA polymerase catalyzes the transcription of DNA into RNA using the four ribonucleoside triphosphates as substrates. The protein is DNA-directed RNA polymerase subunit beta of Neisseria meningitidis serogroup B (strain ATCC BAA-335 / MC58).